The primary structure comprises 81 residues: Photosystem I iron-sulfur center (81 aa).

4Fe-4S ferredoxin-type domains are found at residues 2–31 (AHSV…MIPW) and 39–68 (IASA…VRVY). Residues Cys11, Cys14, Cys17, Cys21, Cys48, Cys51, Cys54, and Cys58 each coordinate [4Fe-4S] cluster.

As to quaternary structure, the eukaryotic PSI reaction center is composed of at least 11 subunits. [4Fe-4S] cluster serves as cofactor.

The protein resides in the plastid. Its subcellular location is the chloroplast thylakoid membrane. The enzyme catalyses reduced [plastocyanin] + hnu + oxidized [2Fe-2S]-[ferredoxin] = oxidized [plastocyanin] + reduced [2Fe-2S]-[ferredoxin]. Its function is as follows. Apoprotein for the two 4Fe-4S centers FA and FB of photosystem I (PSI); essential for photochemical activity. FB is the terminal electron acceptor of PSI, donating electrons to ferredoxin. The C-terminus interacts with PsaA/B/D and helps assemble the protein into the PSI complex. Required for binding of PsaD and PsaE to PSI. PSI is a plastocyanin-ferredoxin oxidoreductase, converting photonic excitation into a charge separation, which transfers an electron from the donor P700 chlorophyll pair to the spectroscopically characterized acceptors A0, A1, FX, FA and FB in turn. This is Photosystem I iron-sulfur center from Psilotum nudum (Whisk fern).